Consider the following 758-residue polypeptide: G-protein alpha subunit activating protein gbas-1 (758 aa).

Positions 30–48 (LDEVDNADFEREDDEEEVL) are enriched in acidic residues. The tract at residues 30-70 (LDEVDNADFEREDDEEEVLSEPSESPYTSTPKSSKRVNKTR) is disordered. Residues 49-61 (SEPSESPYTSTPK) show a composition bias toward low complexity. The GBA motif lies at 653-666 (ETVTVEEFLMNSYS). The segment at 668 to 690 (AAPSTSTAPAPPKAPVTAPPAPQ) is disordered. A compositionally biased stretch (pro residues) spans 676–689 (PAPPKAPVTAPPAP).

As to quaternary structure, interacts (via GBA motif) with guanine nucleotide-binding protein G(o) subunit alpha goa-1 (in GDP-bound form); the interaction leads to activation of goa-1. Expressed in some neurons including the head and tail neurons, HSN and VC, in a subset of glial cells, in the distal tips cells and in the intestine.

Its function is as follows. Acts as a non-receptor guanine nucleotide exchange factor which binds to and activates G-protein alpha subunit goa-1. The protein is G-protein alpha subunit activating protein gbas-1 of Caenorhabditis elegans.